A 111-amino-acid polypeptide reads, in one-letter code: Integration host factor subunit alpha (111 aa).

This sequence belongs to the bacterial histone-like protein family. As to quaternary structure, heterodimer of an alpha and a beta chain.

Its function is as follows. This protein is one of the two subunits of integration host factor, a specific DNA-binding protein that functions in genetic recombination as well as in transcriptional and translational control. The sequence is that of Integration host factor subunit alpha from Chelativorans sp. (strain BNC1).